A 119-amino-acid polypeptide reads, in one-letter code: MYKMSTSELLKHIYDINLSYLLLAQRLINDEKASAMFRLGITDTMADALSQLTLPQMVKLAETNQLVCHFRFSDHNTIHHLTKESRVDDLQQIHTGILLSSHLLHELSLKDGSASKKRA.

It belongs to the FlhD family. As to quaternary structure, homodimer; disulfide-linked. Forms a heterohexamer composed of two FlhC and four FlhD subunits. Each FlhC binds a FlhD dimer, forming a heterotrimer, and a hexamer assembles by dimerization of two heterotrimers.

It is found in the cytoplasm. Its function is as follows. Functions in complex with FlhC as a master transcriptional regulator that regulates transcription of several flagellar and non-flagellar operons by binding to their promoter region. Activates expression of class 2 flagellar genes, including fliA, which is a flagellum-specific sigma factor that turns on the class 3 genes. Also regulates genes whose products function in a variety of physiological pathways. The chain is Flagellar transcriptional regulator FlhD from Yersinia enterocolitica.